Reading from the N-terminus, the 867-residue chain is Retinoblastoma-related protein 1 (867 aa).

Residues 275-476 (TPVTSAMTTA…EKGSSLYNSL (202 aa)) are domain A. Residues 275–722 (TPVTSAMTTA…NEVFVPAAKP (448 aa)) form a pocket; binds RPD3I and RBAP1 region. Residues 477–594 (IVARPSVASE…PVGGNEKCAD (118 aa)) are spacer. Residues 512–563 (EGLPATPSKKRAAGPDDNADPRSPKRSCNESRNTVVERNLQTPPPKQSHMVS) are disordered. The span at 530–540 (ADPRSPKRSCN) shows a compositional bias: basic and acidic residues. Residues 541–552 (ESRNTVVERNLQ) show a composition bias toward polar residues. Residues 595 to 722 (VTIHIFFSKI…NEVFVPAAKP (128 aa)) are domain B. 2 disordered regions span residues 734-762 (PEDK…MSPK) and 843-867 (QING…ETDT).

Belongs to the retinoblastoma protein (RB) family. Interacts with RPD3I, RBAP1, the Arabidopsis cyclin CYCD3-1, the mastrevirus replication-associated protein A (RepA) and the begomovirus replication-associated protein (Rep). As to expression, ubiquitous.

The protein localises to the nucleus. In terms of biological role, regulator of biological processes that recruits a histone deacetylase to control gene transcription. May play a role in the entry into mitosis, negatively regulating the cell proliferation. Formation of stable complexes with geminiviridae replication-associated proteins may create a cellular environment which favors viral DNA replication. This chain is Retinoblastoma-related protein 1 (RBR1), found in Zea mays (Maize).